The following is an 85-amino-acid chain: Large ribosomal subunit protein bL27 (85 aa).

The interval 1–21 (MAHKKGGGSTKNGRDSNPKYL) is disordered.

Belongs to the bacterial ribosomal protein bL27 family.

The protein is Large ribosomal subunit protein bL27 of Chlorobium chlorochromatii (strain CaD3).